The sequence spans 200 residues: Small ribosomal subunit protein uS4 (200 aa).

The tract at residues 22 to 42 (TGKELEKRPYAPGPHGPNQRK) is disordered. The S4 RNA-binding domain maps to 92-152 (ARLDNLVYRM…EKSRNLAVIK (61 aa)).

The protein belongs to the universal ribosomal protein uS4 family. As to quaternary structure, part of the 30S ribosomal subunit. Contacts protein S5. The interaction surface between S4 and S5 is involved in control of translational fidelity.

Its function is as follows. One of the primary rRNA binding proteins, it binds directly to 16S rRNA where it nucleates assembly of the body of the 30S subunit. With S5 and S12 plays an important role in translational accuracy. The chain is Small ribosomal subunit protein uS4 from Bacillus cytotoxicus (strain DSM 22905 / CIP 110041 / 391-98 / NVH 391-98).